A 1147-amino-acid chain; its full sequence is SR-related and CTD-associated factor 4 (1147 aa).

The CID domain occupies M1–S139. K49 carries the post-translational modification N6-acetyllysine. 4 disordered regions span residues A145–Q179, K235–K254, D269–A331, and V424–T502. S154 carries the phosphoserine modification. 2 stretches are compositionally biased toward low complexity: residues T283–A292 and T299–A310. Basic and acidic residues predominate over residues V424–K433. Over residues S434 to R475 the composition is skewed to basic residues. Residues R477–Q492 are compositionally biased toward basic and acidic residues. Residues T508–N582 form the RRM domain. Disordered stretches follow at residues D629–P661 and R879–R1147. S656 carries the post-translational modification Phosphoserine. A compositionally biased stretch (pro residues) spans R879–G913. The span at Q941–Q965 shows a compositional bias: low complexity. The segment covering Q966 to Q977 has biased composition (pro residues). Phosphoserine is present on S1004. A compositionally biased stretch (basic and acidic residues) spans V1009–D1085.

As to quaternary structure, interacts with POLR2A; via C-terminal heptapeptide repeat domain (CTD) phosphorylated at 'Ser-2' and 'Ser-5'.

It is found in the nucleus. Functionally, anti-terminator protein required to prevent early mRNA termination during transcription. Together with SCAF8, acts by suppressing the use of early, alternative poly(A) sites, thereby preventing the accumulation of non-functional truncated proteins. Mechanistically, associates with the phosphorylated C-terminal heptapeptide repeat domain (CTD) of the largest RNA polymerase II subunit (POLR2A), and subsequently binds nascent RNA upstream of early polyadenylation sites to prevent premature mRNA transcript cleavage and polyadenylation. Independently of SCAF8, also acts as a suppressor of transcriptional readthrough. This chain is SR-related and CTD-associated factor 4, found in Homo sapiens (Human).